A 778-amino-acid polypeptide reads, in one-letter code: Endonuclease MutS2 (778 aa).

328–335 lines the ATP pocket; the sequence is GPNTGGKT. A Smr domain is found at 702 to 777; the sequence is LDLRGKRYEE…GSGATIVTFK (76 aa).

This sequence belongs to the DNA mismatch repair MutS family. MutS2 subfamily. As to quaternary structure, homodimer. Binds to stalled ribosomes, contacting rRNA.

Functionally, endonuclease that is involved in the suppression of homologous recombination and thus may have a key role in the control of bacterial genetic diversity. Its function is as follows. Acts as a ribosome collision sensor, splitting the ribosome into its 2 subunits. Detects stalled/collided 70S ribosomes which it binds and splits by an ATP-hydrolysis driven conformational change. Acts upstream of the ribosome quality control system (RQC), a ribosome-associated complex that mediates the extraction of incompletely synthesized nascent chains from stalled ribosomes and their subsequent degradation. Probably generates substrates for RQC. This is Endonuclease MutS2 from Streptococcus pneumoniae (strain ATCC 700669 / Spain 23F-1).